The chain runs to 908 residues: Protein translocase subunit SecA (908 aa).

ATP is bound by residues Q87, 105-109, and D512; that span reads GEGKT. The interval 865–908 is disordered; sequence GGDDGSDEMMAHTPMIRDGDKVGRNDPCPCGSGRKYKQCHGKLS. A compositionally biased stretch (basic and acidic residues) spans 879–888; the sequence is MIRDGDKVGR. C892, C894, C903, and H904 together coordinate Zn(2+). A compositionally biased stretch (basic residues) spans 898 to 908; the sequence is RKYKQCHGKLS.

This sequence belongs to the SecA family. In terms of assembly, monomer and homodimer. Part of the essential Sec protein translocation apparatus which comprises SecA, SecYEG and auxiliary proteins SecDF-YajC and YidC. It depends on Zn(2+) as a cofactor.

The protein localises to the cell inner membrane. Its subcellular location is the cytoplasm. It catalyses the reaction ATP + H2O + cellular proteinSide 1 = ADP + phosphate + cellular proteinSide 2.. Its function is as follows. Part of the Sec protein translocase complex. Interacts with the SecYEG preprotein conducting channel. Has a central role in coupling the hydrolysis of ATP to the transfer of proteins into and across the cell membrane, serving both as a receptor for the preprotein-SecB complex and as an ATP-driven molecular motor driving the stepwise translocation of polypeptide chains across the membrane. In Shewanella sp. (strain MR-4), this protein is Protein translocase subunit SecA.